Reading from the N-terminus, the 343-residue chain is MIKLSNITKVFQQGARTIQALNNVSLHVPAGQIYGVIGASGAGKSTLIRCVNLLERPTEGSVMVGGQELTTLSESGLTKARRQIGMIFQHFNLLSSRTVFGNVALPLELDNTPKEEIKRRVTELLDLVGLGDKHDSYPANLSGGQKQRVAIARALASNPKVLLCDEATSALDPATTRSILELLKDINRRLGLTILLITHEMDVVKRICDCVAVISNGELIEQDTVSEVFSHPKTPLAQKFIQSTLHLDIPEDYQARLKASPETDSVPMLRMEFTGQSVDAPLLSETARRFNVNNNIISAQMDYAGGVKFGIMLTEMHGTQEETQAAIAWLQDHHVKVEVLGYV.

The 240-residue stretch at 2–241 (IKLSNITKVF…PKTPLAQKFI (240 aa)) folds into the ABC transporter domain. Position 38–45 (38–45 (GASGAGKS)) interacts with ATP.

This sequence belongs to the ABC transporter superfamily. Methionine importer (TC 3.A.1.24) family. As to quaternary structure, the complex is composed of two ATP-binding proteins (MetN), two transmembrane proteins (MetI) and a solute-binding protein (MetQ).

The protein resides in the cell inner membrane. The catalysed reaction is L-methionine(out) + ATP + H2O = L-methionine(in) + ADP + phosphate + H(+). It carries out the reaction D-methionine(out) + ATP + H2O = D-methionine(in) + ADP + phosphate + H(+). Functionally, part of the ABC transporter complex MetNIQ involved in methionine import. Responsible for energy coupling to the transport system. In Salmonella typhi, this protein is Methionine import ATP-binding protein MetN 1.